We begin with the raw amino-acid sequence, 235 residues long: Aspartate/glutamate leucyltransferase (235 aa).

Belongs to the R-transferase family. Bpt subfamily.

The protein resides in the cytoplasm. The enzyme catalyses N-terminal L-glutamyl-[protein] + L-leucyl-tRNA(Leu) = N-terminal L-leucyl-L-glutamyl-[protein] + tRNA(Leu) + H(+). It carries out the reaction N-terminal L-aspartyl-[protein] + L-leucyl-tRNA(Leu) = N-terminal L-leucyl-L-aspartyl-[protein] + tRNA(Leu) + H(+). Functionally, functions in the N-end rule pathway of protein degradation where it conjugates Leu from its aminoacyl-tRNA to the N-termini of proteins containing an N-terminal aspartate or glutamate. The chain is Aspartate/glutamate leucyltransferase from Pseudomonas putida (strain ATCC 700007 / DSM 6899 / JCM 31910 / BCRC 17059 / LMG 24140 / F1).